We begin with the raw amino-acid sequence, 183 residues long: Caspase recruitment domain-containing protein 19 (183 aa).

Cys7 and Cys77 form a disulfide bridge. The CARD domain occupies 8 to 99 (DRLVQDTPFL…PLHSHLPSRY (92 aa)). A helical membrane pass occupies residues 122–142 (GPMSFLAGLGLAAGLALLLYC).

In terms of assembly, associates with BCL10 by CARD-CARD interaction.

It localises to the endoplasmic reticulum membrane. The protein localises to the mitochondrion membrane. Functionally, plays a role in inhibiting the effects of BCL10-induced activation of NF-kappa-B. This chain is Caspase recruitment domain-containing protein 19, found in Mus musculus (Mouse).